The sequence spans 251 residues: MSQTILEIKDLYASVGETTILKGVNLSIRAGEIHAIMGPNGSGKSTLSKVIAGHPAYSLISGDILFFGQSILEIEPDERAKAGIFLAFQYPVEIPGVSNSDFLRIALNARRKFQGLSEFSPLEFFQLITEKIDLVGMQESFLTRNVNEGFSGGEKKRNEILQMALLDSKISILDETDSGLDIDALRVVAKGINTLAKSTNSIILITHYQRLLDYIIPDFVHIMSNGQIVKTGSVTLAQDLEKHGYDWITQT.

Residues 6-250 (LEIKDLYASV…EKHGYDWITQ (245 aa)) enclose the ABC transporter domain. Position 38–45 (38–45 (GPNGSGKS)) interacts with ATP.

The protein belongs to the ABC transporter superfamily. Ycf16 family.

It is found in the plastid. The protein resides in the chloroplast. The sequence is that of Probable ATP-dependent transporter ycf16 (ycf16) from Pyropia yezoensis (Susabi-nori).